Consider the following 431-residue polypeptide: MAQFYSAKRRVTTRQIITVEATDLDPFGQGVARHNGKALFIPGLLPNERAEVTLTEDKSKYSRGQVKRRLNDSPERVAPRCPHFGVCGGCQQQHASVALQQSSKSTALARLMKHEVNEIISGEPWGYRRRARLSLSYEPKTQKLAMGFRKAASSDIVDVKQCPVLVPHLEALLPHLRNCLSDLQGARALGHVELVLADNGPLMVLRHTAPLSAPDREKLERFSHSHELTLFLAPQSEILERVSGDDPWYLSDGLRLTFSPRDFIQVNDGVNQQMVAKAIEWLDVQPDDRVLDLFCGMGNFTLPLAQRAASVVGVEGVNALVEKGQQNAHHNALDNVTFFHENLEEDVTQQPWAQHGFDKVLLDPARAGAPGVMQHIIKLAPKRVVYVSCNPATLARDSEALLSAGYQIQRLAMLDMFPHTGHLESMVLFQL.

Positions 8–68 (KRRVTTRQII…SKYSRGQVKR (61 aa)) constitute a TRAM domain. Residues C81, C87, C90, and C162 each coordinate [4Fe-4S] cluster. S-adenosyl-L-methionine is bound by residues Q265, F294, N299, E315, N342, and D363. The active-site Nucleophile is the C389.

This sequence belongs to the class I-like SAM-binding methyltransferase superfamily. RNA M5U methyltransferase family. RlmD subfamily.

The catalysed reaction is uridine(1939) in 23S rRNA + S-adenosyl-L-methionine = 5-methyluridine(1939) in 23S rRNA + S-adenosyl-L-homocysteine + H(+). Catalyzes the formation of 5-methyl-uridine at position 1939 (m5U1939) in 23S rRNA. This chain is 23S rRNA (uracil(1939)-C(5))-methyltransferase RlmD, found in Enterobacter sp. (strain 638).